The chain runs to 322 residues: Carnosine N-methyltransferase 2 (322 aa).

Glu-58 provides a ligand contact to substrate. Residues Gly-90, Glu-119, Ser-150, and Ile-172 each coordinate S-adenosyl-L-methionine. Position 313 (Asn-313) interacts with substrate.

The protein belongs to the class I-like SAM-binding methyltransferase superfamily. HNMT family. Monomer.

It catalyses the reaction carnosine + S-adenosyl-L-methionine = anserine + S-adenosyl-L-homocysteine + H(+). Its function is as follows. N-methyltransferase that mediates the formation of anserine (beta-alanyl-N(Pi)-methyl-L-histidine) from carnosine. Anserine, a methylated derivative of carnosine (beta-alanyl-L-histidine), is an abundant constituent of vertebrate skeletal muscles. The polypeptide is Carnosine N-methyltransferase 2 (Gallus gallus (Chicken)).